We begin with the raw amino-acid sequence, 786 residues long: Ribosome biogenesis protein BOP1 homolog (786 aa).

The segment covering Met-1–Val-11 has biased composition (basic residues). Residues Met-1–Ile-161 are disordered. Over residues Ile-17–Gln-26 the composition is skewed to polar residues. 3 stretches are compositionally biased toward acidic residues: residues Glu-44–Asp-53, Thr-60–Gly-72, and Ser-82–Lys-114. Over residues Lys-122 to Ile-135 the composition is skewed to polar residues. The segment covering Pro-141–Tyr-150 has biased composition (basic and acidic residues). Over residues Glu-151–Asp-160 the composition is skewed to acidic residues. WD repeat units follow at residues Gly-447–Glu-488, Asn-490–Val-528, Thr-572–Pro-614, Lys-617–Lys-655, Thr-658–Gln-697, Leu-701–Gln-740, and Arg-756–Thr-786.

This sequence belongs to the WD repeat BOP1/ERB1 family.

It localises to the nucleus. It is found in the nucleolus. The protein localises to the nucleoplasm. Required for maturation of ribosomal RNAs and formation of the large ribosomal subunit. The polypeptide is Ribosome biogenesis protein BOP1 homolog (Drosophila grimshawi (Hawaiian fruit fly)).